The primary structure comprises 67 residues: Large ribosomal subunit protein uL30 (67 aa).

This sequence belongs to the universal ribosomal protein uL30 family. Part of the 50S ribosomal subunit.

The protein is Large ribosomal subunit protein uL30 of Thermotoga neapolitana (strain ATCC 49049 / DSM 4359 / NBRC 107923 / NS-E).